We begin with the raw amino-acid sequence, 64 residues long: Small ribosomal subunit protein bS21 (64 aa).

Belongs to the bacterial ribosomal protein bS21 family.

In Amoebophilus asiaticus (strain 5a2), this protein is Small ribosomal subunit protein bS21.